Here is a 71-residue protein sequence, read N- to C-terminus: Large ribosomal subunit protein uL29 (71 aa).

This sequence belongs to the universal ribosomal protein uL29 family.

This is Large ribosomal subunit protein uL29 from Methanocella arvoryzae (strain DSM 22066 / NBRC 105507 / MRE50).